We begin with the raw amino-acid sequence, 172 residues long: 3-hydroxydecanoyl-[acyl-carrier-protein] dehydratase (172 aa).

The active site involves histidine 71.

The protein belongs to the thioester dehydratase family. FabA subfamily. As to quaternary structure, homodimer.

It localises to the cytoplasm. The catalysed reaction is a (3R)-hydroxyacyl-[ACP] = a (2E)-enoyl-[ACP] + H2O. The enzyme catalyses (3R)-hydroxydecanoyl-[ACP] = (2E)-decenoyl-[ACP] + H2O. It carries out the reaction (2E)-decenoyl-[ACP] = (3Z)-decenoyl-[ACP]. The protein operates within lipid metabolism; fatty acid biosynthesis. Necessary for the introduction of cis unsaturation into fatty acids. Catalyzes the dehydration of (3R)-3-hydroxydecanoyl-ACP to E-(2)-decenoyl-ACP and then its isomerization to Z-(3)-decenoyl-ACP. Can catalyze the dehydratase reaction for beta-hydroxyacyl-ACPs with saturated chain lengths up to 16:0, being most active on intermediate chain length. This is 3-hydroxydecanoyl-[acyl-carrier-protein] dehydratase from Cronobacter sakazakii (strain ATCC BAA-894) (Enterobacter sakazakii).